A 138-amino-acid chain; its full sequence is Microneme antigen L2 (138 aa).

PAN domains lie at Cys-9–Cys-78 and Cys-82–Ala-138. Intrachain disulfides connect Cys-9/Cys-78, Cys-34/Cys-56, Cys-38/Cys-44, Cys-82/Cys-86, Cys-107/Cys-127, and Cys-111/Cys-117. A carbohydrate is bound at residue Ser-18. Residues Lys-59, Tyr-66, and Asp-71 each coordinate a carbohydrate.

In terms of assembly, homodimer or heterodimer. Contains six disulfide bonds.

It localises to the cytoplasmic vesicle. It is found in the secretory vesicle. The protein localises to the microneme. Functionally, galactose-binding lectin. Plays a role in adhesion to the host cell. Has a potential role in invasion of host cells. The protein is Microneme antigen L2 of Sarcocystis muris.